The following is a 422-amino-acid chain: Inhibitory synaptic factor 2A (422 aa).

The tract at residues 143–163 (FLADSKEKSEAGPMEEPRPCS) is disordered. The segment covering 146–160 (DSKEKSEAGPMEEPR) has biased composition (basic and acidic residues). Ser177 is subject to Phosphoserine. A coiled-coil region spans residues 344–370 (TEVVDLKAQLQVMENLISSSQETIKVL).

It belongs to the INSYN2 family. In terms of assembly, interacts with GPHN.

It localises to the postsynaptic density. Functionally, component of the protein machinery at the inhibitory synapses, probably acting as a scaffold. Inhibitory synapses dampen neuronal activity through postsynaptic hyperpolarization. This synaptic inhibition is fundamental for the functioning of the central nervous system, shaping and orchestrating the flow of information through neuronal networks to generate a precise neural code. This Mus musculus (Mouse) protein is Inhibitory synaptic factor 2A.